A 102-amino-acid chain; its full sequence is Biotrophy-associated secreted protein 2 (102 aa).

An N-terminal signal peptide occupies residues 1 to 19 (MVRVSTFAAILAMALSVTA). N-linked (GlcNAc...) asparagine glycosylation is present at Asn-46.

Its subcellular location is the secreted. Secreted effector involved in biotrophic colonization of plant cells. This chain is Biotrophy-associated secreted protein 2, found in Pyricularia oryzae (strain 70-15 / ATCC MYA-4617 / FGSC 8958) (Rice blast fungus).